The sequence spans 585 residues: A-type ATP synthase subunit A (585 aa).

Residue 231-238 (GPFGSGKT) participates in ATP binding.

Belongs to the ATPase alpha/beta chains family. Has multiple subunits with at least A(3), B(3), C, D, E, F, H, I and proteolipid K(x).

The protein resides in the cell membrane. It carries out the reaction ATP + H2O + 4 H(+)(in) = ADP + phosphate + 5 H(+)(out). Produces ATP from ADP in the presence of a proton gradient across the membrane. The archaeal alpha chain is a catalytic subunit. Its function is as follows. Component of the A-type ATP synthase that produces ATP from ADP in the presence of a proton gradient across the membrane. The A chain is the catalytic subunit. This is A-type ATP synthase subunit A from Thermococcus sp. (strain KI).